Reading from the N-terminus, the 265-residue chain is RNA-binding protein 7 (265 aa).

Gly2 is subject to N-acetylglycine. An RRM domain is found at Arg10–Gly87. 2 ZCCHC8 binding regions span residues Leu25–Pro35 and His59–Phe76. Residues Ala91 to Ser125 form a disordered region. The span at Leu107 to Ser125 shows a compositional bias: polar residues. Position 136 is a phosphoserine; by MAPKAPK2 (Ser136). Ser137 carries the phosphoserine modification. Arg152 is modified (omega-N-methylarginine). 2 disordered regions span residues Asp166–Asp224 and Asp237–His265. Positions Phe170–Ser196 are enriched in polar residues. Ser203 bears the Phosphoserine mark. Composition is skewed to basic and acidic residues over residues Leu207–Asp224 and Asp237–Arg256.

As to quaternary structure, component of the nuclear exosome targeting (NEXT) complex composed of MTREX, ZCCHC8, and RBM7 that directs a subset of non-coding short-lived RNAs for exosomal degradation. Interacts with ZCCHC8 and SF3B2/SAP145. Binds to MTREX through ZCCHC8. Interacts with YWHAE and YWHAZ; these interactions are stress-dependent and RBM7 phosphorylation dependent; release RNA from the NEXT complex and may affect RNA targeting to the nuclear RNA exosomome for degradation. Interacts with MEPCE and LARP7, the core subunits of 7SK snRNP; upon genotoxic stress this interaction is enhanced, triggering the release of inactive P-TEFb complex from the core and P-TEFb complex activation. Post-translationally, phosphorylated at Ser-136 by MAPK14/p38-alpha-activated MAPKAPK2/MK2; this phosphorylation is stress-dependent; this phosphorylation decreases its RNA-binding capacity therefore affecting RNA nuclear exosome-mediated degradation. This phosphorylation mediates YWHAE and YWHAZ interactions.

The protein resides in the nucleus. Its subcellular location is the nucleoplasm. In terms of biological role, RNA-binding subunit of the trimeric nuclear exosome targeting (NEXT) complex, a complex that functions as an RNA exosome cofactor that directs a subset of non-coding short-lived RNAs for exosomal degradation. NEXT is involved in surveillance and turnover of aberrant transcripts and non-coding RNAs. Binds preferentially polyuridine sequences and associates with newly synthesized RNAs, including pre-mRNAs and short-lived exosome substrates such as promoter upstream transcripts (PROMPTs), enhancer RNAs (eRNAs), and 3'-extended products from small nuclear RNAs (snRNAs). Participates in several biological processes including DNA damage response (DDR) and stress response. During stress response, activation of the p38MAPK-MK2 pathway decreases RBM7-RNA-binding and subsequently the RNA exosome degradation activities, thereby modulating the turnover of non-coding transcriptome. Participates in DNA damage response (DDR), through its interaction with MEPCE and LARP7, the core subunits of 7SK snRNP complex, that release the positive transcription elongation factor b (P-TEFb) complex from the 7SK snRNP. In turn, activation of P-TEFb complex induces the transcription of P-TEFb-dependent DDR genes to promote cell viability. In Mus musculus (Mouse), this protein is RNA-binding protein 7.